The sequence spans 318 residues: NADH-ubiquinone oxidoreductase chain 1 (318 aa).

Transmembrane regions (helical) follow at residues 2–22, 71–91, 98–118, 146–166, 171–191, 222–242, 253–273, and 294–314; these read FMVNLLMLVIPVMLAMAFLTL, YIIAPTLALSIALIMWTPLPI, INLGVLFILATSSLAVYSILW, LAIILLCILLMSGSFTLSTLI, HTWLLLPSWPLAMMWFISTLA, LFFMAEYTNIIMMNALTATIF, EFFSINFTLKTLLLTTIFLWV, and LPLTLAMCMWHTALPIFLANI.

The protein belongs to the complex I subunit 1 family.

The protein localises to the mitochondrion inner membrane. The enzyme catalyses a ubiquinone + NADH + 5 H(+)(in) = a ubiquinol + NAD(+) + 4 H(+)(out). Its function is as follows. Core subunit of the mitochondrial membrane respiratory chain NADH dehydrogenase (Complex I) that is believed to belong to the minimal assembly required for catalysis. Complex I functions in the transfer of electrons from NADH to the respiratory chain. The immediate electron acceptor for the enzyme is believed to be ubiquinone. The chain is NADH-ubiquinone oxidoreductase chain 1 (MT-ND1) from Nycticebus coucang (Slow loris).